The sequence spans 413 residues: Tyrosine--tRNA ligase (413 aa).

A 'HIGH' region motif is present at residues 55-64; sequence PTRPDLHLGH. A 'KMSKS' region motif is present at residues 242–246; that stretch reads KMSKS. Lysine 245 serves as a coordination point for ATP. The S4 RNA-binding domain occupies 346 to 410; that stretch reads VKLSYILREC…GKKAFRRLVK (65 aa).

Belongs to the class-I aminoacyl-tRNA synthetase family. TyrS type 2 subfamily. In terms of assembly, homodimer.

It is found in the cytoplasm. It carries out the reaction tRNA(Tyr) + L-tyrosine + ATP = L-tyrosyl-tRNA(Tyr) + AMP + diphosphate + H(+). Catalyzes the attachment of tyrosine to tRNA(Tyr) in a two-step reaction: tyrosine is first activated by ATP to form Tyr-AMP and then transferred to the acceptor end of tRNA(Tyr). This is Tyrosine--tRNA ligase from Synechococcus sp. (strain JA-2-3B'a(2-13)) (Cyanobacteria bacterium Yellowstone B-Prime).